A 462-amino-acid chain; its full sequence is GTPase Der (462 aa).

EngA-type G domains lie at 9–171 (KTIA…NLNQ) and 201–372 (IQVG…ECFS). Residues 15–22 (GQPNVGKS), 62–66 (DTGGM), 123–126 (NKID), 207–214 (GRVNVGKS), 254–258 (DTAGI), and 318–321 (NKWD) each bind GTP. Residues 373 to 457 (KRIPTSLLNS…PLILNAKDKK (85 aa)) enclose the KH-like domain.

It belongs to the TRAFAC class TrmE-Era-EngA-EngB-Septin-like GTPase superfamily. EngA (Der) GTPase family. Associates with the 50S ribosomal subunit.

In terms of biological role, GTPase that plays an essential role in the late steps of ribosome biogenesis. This Helicobacter pylori (strain P12) protein is GTPase Der.